Reading from the N-terminus, the 375-residue chain is MTKLESLLHASTGLSLISGYLMYNRRYLLSFDKKREGETTQSISVIIPARNEEKRLPKLLKSLSQQSMRVECIVMDDDSNDRTAEIAREMGAKVYNVTYDNNGNTWIGKSYACYLGASYTVSDILIFMDADVELNNEHALEAIIQSYARQQYRGLMSIQPYHVVYKPYEHLSAMFNLMTVVGTNSFSTLSKSKGESLAFGPVTVMNKSDYILTQGHKNAASHIIEGFSLGKAFQRCQLPVTRFEGQGFVSFRMYEAGFKTMIEGWTKHLAVGASSTQPHIMMLIILWMVGCITSFSGLALSLFMKTLSFKRMALSYSLYTLQFIRLHRRVGRFSILFLAINSILFLVFILVYINSYRHIHYTKQVKWKGRQFSIK.

A run of 4 helical transmembrane segments spans residues 7-23 (LLHA…YLMY), 112-132 (ACYL…DADV), 280-300 (IMML…GLAL), and 333-353 (FSIL…LVYI).

Belongs to the glycosyltransferase 2 family. CrtQ subfamily.

It is found in the cell membrane. The protein operates within carotenoid biosynthesis; staphyloxanthin biosynthesis; staphyloxanthin from farnesyl diphosphate: step 4/5. Its function is as follows. Catalyzes the glycosylation of 4,4'-diaponeurosporenoate, i.e. the esterification of glucose at the C1'' position with the carboxyl group of 4,4'-diaponeurosporenic acid, to form glycosyl-4,4'-diaponeurosporenoate. This is a step in the biosynthesis of staphyloxanthin, an orange pigment present in most staphylococci strains. The polypeptide is 4,4'-diaponeurosporenoate glycosyltransferase (crtQ) (Staphylococcus haemolyticus (strain JCSC1435)).